Reading from the N-terminus, the 311-residue chain is tRNA-cytidine(32) 2-sulfurtransferase (311 aa).

A PP-loop motif motif is present at residues 47 to 52 (SGGKDS). The [4Fe-4S] cluster site is built by cysteine 122, cysteine 125, and cysteine 213.

This sequence belongs to the TtcA family. As to quaternary structure, homodimer. It depends on Mg(2+) as a cofactor. Requires [4Fe-4S] cluster as cofactor.

It localises to the cytoplasm. The catalysed reaction is cytidine(32) in tRNA + S-sulfanyl-L-cysteinyl-[cysteine desulfurase] + AH2 + ATP = 2-thiocytidine(32) in tRNA + L-cysteinyl-[cysteine desulfurase] + A + AMP + diphosphate + H(+). The protein operates within tRNA modification. Catalyzes the ATP-dependent 2-thiolation of cytidine in position 32 of tRNA, to form 2-thiocytidine (s(2)C32). The sulfur atoms are provided by the cysteine/cysteine desulfurase (IscS) system. This Salmonella choleraesuis (strain SC-B67) protein is tRNA-cytidine(32) 2-sulfurtransferase.